The primary structure comprises 56 residues: PI-stichotoxin-Hcr2a (56 aa).

A BPTI/Kunitz inhibitor domain is found at 4–54 (CLEPKVVGPCTAYFPRFYFDSETGKCTPFIYGGCEGNSYVDEKLHACRAIC). 3 cysteine pairs are disulfide-bonded: C4–C54, C13–C37, and C29–C50.

This sequence belongs to the venom Kunitz-type family. Sea anemone type 2 potassium channel toxin subfamily.

The protein localises to the secreted. The protein resides in the nematocyst. Its function is as follows. Serine protease inhibitor that acts on trypsin. The polypeptide is PI-stichotoxin-Hcr2a (Radianthus crispa (Leathery sea anemone)).